A 709-amino-acid chain; its full sequence is Peptidoglycan D,D-transpeptidase FtsI homolog (709 aa).

Residues 20–42 (LQGIYYAFLSISTMIKIALDPYS) traverse the membrane as a helical segment. Ser341 serves as the catalytic Acyl-ester intermediate.

This sequence belongs to the transpeptidase family.

Its subcellular location is the plastid. It localises to the chloroplast membrane. The enzyme catalyses Preferential cleavage: (Ac)2-L-Lys-D-Ala-|-D-Ala. Also transpeptidation of peptidyl-alanyl moieties that are N-acyl substituents of D-alanine.. This Nephroselmis olivacea (Green alga) protein is Peptidoglycan D,D-transpeptidase FtsI homolog (ftsI).